We begin with the raw amino-acid sequence, 452 residues long: Protein CSN12 homolog (452 aa).

The PCI domain occupies 249 to 446 (VTFKYYEGVL…GFVVLSKSGA (198 aa)).

This sequence belongs to the CSN12 family.

The sequence is that of Protein CSN12 homolog (csn-8) from Neurospora crassa (strain ATCC 24698 / 74-OR23-1A / CBS 708.71 / DSM 1257 / FGSC 987).